The following is a 329-amino-acid chain: Lipoyl synthase (329 aa).

The tract at residues 1–23 (MTDLTATPAPAEPAASAYDPTAK) is disordered. Cysteine 76, cysteine 81, cysteine 87, cysteine 102, cysteine 106, cysteine 109, and serine 316 together coordinate [4Fe-4S] cluster. The Radical SAM core domain occupies 87–305 (CFGKGTATFM…EEEAYKMGFT (219 aa)).

Belongs to the radical SAM superfamily. Lipoyl synthase family. It depends on [4Fe-4S] cluster as a cofactor.

It is found in the cytoplasm. The enzyme catalyses [[Fe-S] cluster scaffold protein carrying a second [4Fe-4S](2+) cluster] + N(6)-octanoyl-L-lysyl-[protein] + 2 oxidized [2Fe-2S]-[ferredoxin] + 2 S-adenosyl-L-methionine + 4 H(+) = [[Fe-S] cluster scaffold protein] + N(6)-[(R)-dihydrolipoyl]-L-lysyl-[protein] + 4 Fe(3+) + 2 hydrogen sulfide + 2 5'-deoxyadenosine + 2 L-methionine + 2 reduced [2Fe-2S]-[ferredoxin]. It participates in protein modification; protein lipoylation via endogenous pathway; protein N(6)-(lipoyl)lysine from octanoyl-[acyl-carrier-protein]: step 2/2. Catalyzes the radical-mediated insertion of two sulfur atoms into the C-6 and C-8 positions of the octanoyl moiety bound to the lipoyl domains of lipoate-dependent enzymes, thereby converting the octanoylated domains into lipoylated derivatives. In Burkholderia mallei (strain NCTC 10247), this protein is Lipoyl synthase.